The following is a 243-amino-acid chain: Pyridoxine 5'-phosphate synthase (243 aa).

Residue asparagine 9 participates in 3-amino-2-oxopropyl phosphate binding. A 1-deoxy-D-xylulose 5-phosphate-binding site is contributed by 11–12; that stretch reads DH. Arginine 20 is a binding site for 3-amino-2-oxopropyl phosphate. Histidine 45 serves as the catalytic Proton acceptor. Positions 47 and 52 each coordinate 1-deoxy-D-xylulose 5-phosphate. Glutamate 72 functions as the Proton acceptor in the catalytic mechanism. A 1-deoxy-D-xylulose 5-phosphate-binding site is contributed by threonine 102. The active-site Proton donor is histidine 193. Residues glycine 194 and 215-216 each bind 3-amino-2-oxopropyl phosphate; that span reads GH.

Belongs to the PNP synthase family. Homooctamer; tetramer of dimers.

It is found in the cytoplasm. The catalysed reaction is 3-amino-2-oxopropyl phosphate + 1-deoxy-D-xylulose 5-phosphate = pyridoxine 5'-phosphate + phosphate + 2 H2O + H(+). The protein operates within cofactor biosynthesis; pyridoxine 5'-phosphate biosynthesis; pyridoxine 5'-phosphate from D-erythrose 4-phosphate: step 5/5. Functionally, catalyzes the complicated ring closure reaction between the two acyclic compounds 1-deoxy-D-xylulose-5-phosphate (DXP) and 3-amino-2-oxopropyl phosphate (1-amino-acetone-3-phosphate or AAP) to form pyridoxine 5'-phosphate (PNP) and inorganic phosphate. This chain is Pyridoxine 5'-phosphate synthase, found in Salmonella typhi.